The sequence spans 58 residues: Preprotein translocase subunit SecG (58 aa).

Topologically, residues 1-32 (MAQKKKSSGSGLMSSAGLMTYYDADKKAIHVQ) are cytoplasmic. A helical transmembrane segment spans residues 33–54 (PKTVFIFGAICGIVILAFSAGF). Residues 55-58 (GLWP) lie on the Extracellular side of the membrane.

It belongs to the SEC61-beta family. Component of the protein translocase complex. Heterotrimer consisting of alpha (SecY), beta (SecG) and gamma (SecE) subunits. Can form oligomers of the heterotrimer.

It localises to the cell membrane. Functionally, involved in protein export. The function of the beta subunit is unknown, but it may be involved in stabilization of the trimeric complex. This is Preprotein translocase subunit SecG from Methanococcoides burtonii (strain DSM 6242 / NBRC 107633 / OCM 468 / ACE-M).